The chain runs to 800 residues: Nuclear poly(A) polymerase 2 (800 aa).

Residues 103-105 (FGS), 115-118 (ADID), Asp-171, Lys-232, Tyr-241, and 250-251 (GV) contribute to the ATP site. Mg(2+) is bound by residues Asp-116, Asp-118, and Asp-171. 2 consecutive short sequence motifs (nuclear localization signal) follow at residues 487–494 (RRRQLPSF) and 533–540 (KRKNDDEI). The tract at residues 497 to 576 (PNGYKRSRQS…SGITTSGTPQ (80 aa)) is disordered. Residues 527–538 (SVERYAKRKNDD) are compositionally biased toward basic and acidic residues. Polar residues predominate over residues 564-575 (PDSSGITTSGTP).

It belongs to the poly(A) polymerase family. Monomer. Forms a complex with cleavage and polyadenylation specificity factor (CPSF) subunits CPSF100, CPSF30, FIPS5 and PABN2. The cofactor is Mg(2+). Requires Mn(2+) as cofactor. In terms of tissue distribution, mostly expressed in flowers (highly in the style, receptacle and pedicel, but weakly in the vasculature of sepals) and hypocotyls, and, to a lower extent, in roots and stems. Barely detected in leaves (petioles and vascular system).

It is found in the nucleus. It localises to the cytoplasm. It catalyses the reaction RNA(n) + ATP = RNA(n)-3'-adenine ribonucleotide + diphosphate. Its function is as follows. Essential protein. Polymerase that creates the 3'-poly(A) tail of mRNA's. Also required for the endoribonucleolytic cleavage reaction at some polyadenylation sites. May acquire specificity through interaction with a cleavage and polyadenylation specificity factor (CPSF) at its C-terminus. Mediates the polyadenylation of RNAs that are associated with polynucleotide phosphorylase (e.g. PNP1). The sequence is that of Nuclear poly(A) polymerase 2 from Arabidopsis thaliana (Mouse-ear cress).